The primary structure comprises 471 residues: uncharacterized protein (471 aa).

11 consecutive transmembrane segments (helical) span residues 15–35, 66–86, 89–109, 147–167, 179–199, 210–230, 237–257, 303–323, 353–373, 386–406, and 410–430; these read LWGP…TILL, PLQA…IVGV, AIMF…LFAM, WLGV…IMVQ, FSFN…LVVI, EFVV…IVLM, AFFS…GGFA, VIGI…IVLA, GYFV…VVIF, LAGH…AAGG, and IWGV…IALL.

Belongs to the alanine or glycine:cation symporter (AGCS) (TC 2.A.25) family.

The protein resides in the cell membrane. This is an uncharacterized protein from Bacillus subtilis (strain 168).